The following is an 844-amino-acid chain: MTEDVKADAPKKLSIQRRTKTTVSSTTTGGKSKEVQVEVRKKRTVKTDIAQQEEAKLKAQQEAEAKKIAEQKAAEEKARLEAEKAATKKEADEKSKAEKAKAETAKPAKSAVDSKAKFVDPEKEKRKAEEAELRRKAEEVARQKAEEQARRAAEEAKRYAEADDSDNESSSEDYSDYNLSSRYALEAEDEEDRRNENRGRGKNKVAKAKKGGRDDENSKNSKNERESNRKNQKDAKFGKGKNGKKGTALQQAFTKPVQVVKADVVIGETITVAELANKMSVKATEIIKVMMKMGEMVTINQVIDQETAQLVAEELGHKVILRNENELEEAVLGDRDVNAEKVTRAPVVTIMGHVDHGKTSLLDYIRKAKVAAGEAGGITQHIGAYHVEMDDGKMITFLDTPGHAAFTSMRARGAKATDIVVLVVAADDGVMPQTIEAIQHAKAAGAPLVVAVNKIDKPEANPDRVEQELLQHDVISEKFGGDVQFVPVSAKKGTGVDDLLDAILLQSEVLELTAVKDGMASGVVIESYLDKGRGPVATILVQSGTLRKGDIVLCGFEYGRARAMRDENGKEVDEAGPSIPVELLGLSGVPAAGDEATVVRDEKKAREVALYRQGKFREVKLARQQKAKLENMFSNMSEGDVAELNVIVKADVQGSVEAIVQALNELSTNEVKVKVVGSGVGGITETDATLATASNAIIVGFNVRADATARRVIEAENIDLRYYSIIYELLNEIKAAMSGMLEPEFKQEIIGLAEVRDVFRHPKFGAIAGCMVTEGVVKRNNPIRVLRDNVVIFEGELESLRRFKDDVSEVRNGMECGIGVKNYNDVKVGDQIEVFEVVEVKRSI.

A compositionally biased stretch (basic and acidic residues) spans 1 to 11 (MTEDVKADAPK). Disordered stretches follow at residues 1–48 (MTED…VKTD) and 79–249 (RLEA…GTAL). A compositionally biased stretch (low complexity) spans 21–30 (TTVSSTTTGG). Residues 79-161 (RLEAEKAATK…AAEEAKRYAE (83 aa)) show a composition bias toward basic and acidic residues. Positions 162–175 (ADDSDNESSSEDYS) are enriched in acidic residues. The span at 200-210 (RGKNKVAKAKK) shows a compositional bias: basic residues. Over residues 211–237 (GGRDDENSKNSKNERESNRKNQKDAKF) the composition is skewed to basic and acidic residues. One can recognise a tr-type G domain in the interval 343–513 (TRAPVVTIMG…LLQSEVLELT (171 aa)). The G1 stretch occupies residues 352–359 (GHVDHGKT). 352 to 359 (GHVDHGKT) contacts GTP. Positions 377–381 (GITQH) are G2. The interval 399 to 402 (DTPG) is G3. Residues 399 to 403 (DTPGH) and 453 to 456 (NKID) contribute to the GTP site. A G4 region spans residues 453–456 (NKID). Residues 489–491 (SAK) are G5.

It belongs to the TRAFAC class translation factor GTPase superfamily. Classic translation factor GTPase family. IF-2 subfamily.

It is found in the cytoplasm. One of the essential components for the initiation of protein synthesis. Protects formylmethionyl-tRNA from spontaneous hydrolysis and promotes its binding to the 30S ribosomal subunits. Also involved in the hydrolysis of GTP during the formation of the 70S ribosomal complex. The sequence is that of Translation initiation factor IF-2 from Haemophilus influenzae (strain 86-028NP).